The chain runs to 329 residues: MQTLAQNLTSQGVNASLTQLIHTLANTSKEISHAVRHGALAGVLGATEQENVQGETQKKLDVITNDMLKDALKGDDTVRGLASEEEDYIVEVGDKGEYLVCFDPLDGSSNIDINSLVGTIFSVLPAPTGELSESSFLQAGRQQVAAGYVLYGPSTMLALTTGQGVQLFTLNPETNEYLLTTEAMSISKDTGEFAINMSNQRFWEAPMQTYISDLLLGTIGPREKAFNMRWIAAMVGDVHRVLSRGGIFTYPTDNKNPQKPYKLRLMYEANPMSFLVEQAGGKASTGYETIMDIQPSEIHQRVAVILGSANEVDACLNYHGLDYSEEPQL.

Positions 84, 103, 105, and 106 each coordinate Mg(2+). Substrate is bound by residues 106-109 (DGSS), asparagine 196, and lysine 262. Glutamate 268 provides a ligand contact to Mg(2+).

Belongs to the FBPase class 1 family. Homotetramer. The cofactor is Mg(2+).

It is found in the cytoplasm. It catalyses the reaction beta-D-fructose 1,6-bisphosphate + H2O = beta-D-fructose 6-phosphate + phosphate. Its pathway is carbohydrate biosynthesis; gluconeogenesis. This Shewanella sediminis (strain HAW-EB3) protein is Fructose-1,6-bisphosphatase class 1.